Consider the following 801-residue polypeptide: Probable inorganic carbon transporter subunit DabA (801 aa).

Positions 330, 332, 489, and 504 each coordinate Zn(2+).

It belongs to the inorganic carbon transporter (TC 9.A.2) DabA family. In terms of assembly, forms a complex with DabB. It depends on Zn(2+) as a cofactor.

Its subcellular location is the cell inner membrane. Functionally, part of an energy-coupled inorganic carbon pump. The polypeptide is Probable inorganic carbon transporter subunit DabA (Jannaschia sp. (strain CCS1)).